Consider the following 1674-residue polypeptide: Maestro heat-like repeat-containing protein family member 2A (1674 aa).

The segment at 1–26 (MTEAITEAAVASSEEVSEERDDLGPL) is disordered. HEAT repeat units lie at residues 73–96 (ATTE…ISTQ), 97–133 (RKVN…EMRE), 195–234 (MPYM…TVQF), 254–292 (LKVF…LLLP), 382–419 (SYPK…ADEP), 424–461 (RAIY…CGYQ), 573–612 (PAPQ…SIAP), 615–641 (ADMW…DQKA), 642–679 (WEDK…SFDS), 739–776 (KTVL…ETVK), 993–1030 (GQFG…LHAS), 1221–1263 (DPLM…SHRP), 1381–1420 (EKLL…GAPK), and 1627–1674 (LDFP…QGMS).

This Homo sapiens (Human) protein is Maestro heat-like repeat-containing protein family member 2A (MROH2A).